The following is a 70-amino-acid chain: DNA-directed RNA polymerase subunit omega (70 aa).

The protein belongs to the RNA polymerase subunit omega family. The RNAP catalytic core consists of 2 alpha, 1 beta, 1 beta' and 1 omega subunit. When a sigma factor is associated with the core the holoenzyme is formed, which can initiate transcription.

It carries out the reaction RNA(n) + a ribonucleoside 5'-triphosphate = RNA(n+1) + diphosphate. In terms of biological role, promotes RNA polymerase assembly. Latches the N- and C-terminal regions of the beta' subunit thereby facilitating its interaction with the beta and alpha subunits. The chain is DNA-directed RNA polymerase subunit omega from Bacillus cereus (strain G9842).